A 354-amino-acid chain; its full sequence is Ribosomal RNA large subunit methyltransferase M (354 aa).

S-adenosyl-L-methionine contacts are provided by residues Ser183, 216-219, Asp235, Asp255, and Asp271; that span reads SPGG. The active-site Proton acceptor is Lys300.

Belongs to the class I-like SAM-binding methyltransferase superfamily. RNA methyltransferase RlmE family. RlmM subfamily. In terms of assembly, monomer.

Its subcellular location is the cytoplasm. The enzyme catalyses cytidine(2498) in 23S rRNA + S-adenosyl-L-methionine = 2'-O-methylcytidine(2498) in 23S rRNA + S-adenosyl-L-homocysteine + H(+). Its function is as follows. Catalyzes the 2'-O-methylation at nucleotide C2498 in 23S rRNA. The protein is Ribosomal RNA large subunit methyltransferase M of Pseudomonas entomophila (strain L48).